Here is a 261-residue protein sequence, read N- to C-terminus: 3-methyl-2-oxobutanoate hydroxymethyltransferase (261 aa).

2 residues coordinate Mg(2+): D44 and D83. Residues 44-45, D83, and K113 contribute to the 3-methyl-2-oxobutanoate site; that span reads DS. Mg(2+) is bound at residue E115. The active-site Proton acceptor is E183.

This sequence belongs to the PanB family. In terms of assembly, homodecamer; pentamer of dimers. It depends on Mg(2+) as a cofactor.

Its subcellular location is the cytoplasm. The catalysed reaction is 3-methyl-2-oxobutanoate + (6R)-5,10-methylene-5,6,7,8-tetrahydrofolate + H2O = 2-dehydropantoate + (6S)-5,6,7,8-tetrahydrofolate. It functions in the pathway cofactor biosynthesis; (R)-pantothenate biosynthesis; (R)-pantoate from 3-methyl-2-oxobutanoate: step 1/2. Functionally, catalyzes the reversible reaction in which hydroxymethyl group from 5,10-methylenetetrahydrofolate is transferred onto alpha-ketoisovalerate to form ketopantoate. The chain is 3-methyl-2-oxobutanoate hydroxymethyltransferase from Cyanothece sp. (strain PCC 7425 / ATCC 29141).